The sequence spans 81 residues: Large ribosomal subunit protein bL31B (81 aa).

The protein belongs to the bacterial ribosomal protein bL31 family. Type B subfamily. As to quaternary structure, part of the 50S ribosomal subunit.

The protein is Large ribosomal subunit protein bL31B of Borreliella burgdorferi (strain ZS7) (Borrelia burgdorferi).